The sequence spans 78 residues: Pro-glucagon (78 aa).

It belongs to the glucagon family.

Its subcellular location is the secreted. In terms of biological role, plays a key role in glucose metabolism and homeostasis. Regulates blood glucose by increasing gluconeogenesis and decreasing glycolysis. In Atractosteus spatula (Alligator gar), this protein is Pro-glucagon (gcg).